The primary structure comprises 191 residues: Small ribosomal subunit protein uS5 (191 aa).

Residues 20–83 (FADRLVAINR…EQAKRQMIRV (64 aa)) enclose the S5 DRBM domain. The tract at residues 158-191 (TSPRMVAQRRGKKVSDILKKDGEPAEAAAEPAEA) is disordered. Residues 170 to 180 (KVSDILKKDGE) show a composition bias toward basic and acidic residues. A compositionally biased stretch (low complexity) spans 182–191 (AEAAAEPAEA).

The protein belongs to the universal ribosomal protein uS5 family. As to quaternary structure, part of the 30S ribosomal subunit. Contacts proteins S4 and S8.

Its function is as follows. With S4 and S12 plays an important role in translational accuracy. Located at the back of the 30S subunit body where it stabilizes the conformation of the head with respect to the body. The protein is Small ribosomal subunit protein uS5 of Dinoroseobacter shibae (strain DSM 16493 / NCIMB 14021 / DFL 12).